Reading from the N-terminus, the 196-residue chain is Molybdenum cofactor guanylyltransferase (196 aa).

GTP-binding positions include 10–12 (LAG), lysine 23, asparagine 51, aspartate 69, and aspartate 99. Mg(2+) is bound at residue aspartate 99.

The protein belongs to the MobA family. Monomer. It depends on Mg(2+) as a cofactor.

It is found in the cytoplasm. The catalysed reaction is Mo-molybdopterin + GTP + H(+) = Mo-molybdopterin guanine dinucleotide + diphosphate. Its function is as follows. Transfers a GMP moiety from GTP to Mo-molybdopterin (Mo-MPT) cofactor (Moco or molybdenum cofactor) to form Mo-molybdopterin guanine dinucleotide (Mo-MGD) cofactor. This Shewanella frigidimarina (strain NCIMB 400) protein is Molybdenum cofactor guanylyltransferase.